Reading from the N-terminus, the 55-residue chain is Mitochondrial import receptor subunit TOM7 homolog (55 aa).

At 1–20 (MVKLSKEAKQRLQQLFKGGQ) the chain is on the cytoplasmic side. Residues 21-36 (FAIRWGFIPLVIYLGF) traverse the membrane as a helical segment. The Mitochondrial intermembrane portion of the chain corresponds to 37–55 (KRGADPGMPEPTVLSLLWG).

This sequence belongs to the Tom7 family. As to quaternary structure, forms part of the preprotein translocase complex of the outer mitochondrial membrane (TOM complex) which consists of at least 7 different proteins (TOMM5, TOMM6, TOMM7, TOMM20, TOMM22, TOMM40 and TOMM70).

It is found in the mitochondrion outer membrane. Required for assembly and stability of the TOM complex. Positive regulator of PRKN translocation to damaged mitochondria. Acts probably by stabilizing PINK1 on the outer membrane of depolarized mitochondria. The protein is Mitochondrial import receptor subunit TOM7 homolog (TOMM7) of Bos taurus (Bovine).